The sequence spans 266 residues: 3-oxoadipate enol-lactonase 1 (266 aa).

In terms of domain architecture, AB hydrolase-1 spans 28 to 250; sequence PAIVFSNSLG…DASHLSNIEQ (223 aa).

It catalyses the reaction (4,5-dihydro-5-oxofuran-2-yl)-acetate + H2O = 3-oxoadipate + H(+). Its pathway is aromatic compound metabolism; beta-ketoadipate pathway; 3-oxoadipate from 5-oxo-4,5-dihydro-2-furylacetate: step 1/1. This Acinetobacter baylyi (strain ATCC 33305 / BD413 / ADP1) protein is 3-oxoadipate enol-lactonase 1 (pcaD).